Consider the following 273-residue polypeptide: Putative phosphoenolpyruvate synthase regulatory protein (273 aa).

153 to 160 (AVSRAGKT) is an ADP binding site.

The protein belongs to the pyruvate, phosphate/water dikinase regulatory protein family. PSRP subfamily.

The enzyme catalyses [pyruvate, water dikinase] + ADP = [pyruvate, water dikinase]-phosphate + AMP + H(+). It catalyses the reaction [pyruvate, water dikinase]-phosphate + phosphate + H(+) = [pyruvate, water dikinase] + diphosphate. Functionally, bifunctional serine/threonine kinase and phosphorylase involved in the regulation of the phosphoenolpyruvate synthase (PEPS) by catalyzing its phosphorylation/dephosphorylation. This is Putative phosphoenolpyruvate synthase regulatory protein from Xanthomonas campestris pv. campestris (strain 8004).